The primary structure comprises 224 residues: MNARIGVITFPGTLDDVDAARAARHVGAEAVSLWHADADLKGVDAVVVPGGFSYGDYLRAGAIARLSPIMTEVVDAVQRGMPVLGICNGFQVLCEAGLLPGALIRNVGLHFICRDVWLRVISTSTAWTSRFEPETDLLVSLKSGEGRYVASENVLDELDGEGRVVFRYHDNINGSLRDIAGISSANGRVVGMMPHPEHAIEVLTGPSDDGLGLFYSALDSVLAS.

The 221-residue stretch at 4–224 folds into the Glutamine amidotransferase type-1 domain; sequence RIGVITFPGT…YSALDSVLAS (221 aa). C87 serves as the catalytic Nucleophile. Residues H195 and E197 contribute to the active site.

In terms of assembly, part of the FGAM synthase complex composed of 1 PurL, 1 PurQ and 2 PurS subunits.

It localises to the cytoplasm. It carries out the reaction N(2)-formyl-N(1)-(5-phospho-beta-D-ribosyl)glycinamide + L-glutamine + ATP + H2O = 2-formamido-N(1)-(5-O-phospho-beta-D-ribosyl)acetamidine + L-glutamate + ADP + phosphate + H(+). The catalysed reaction is L-glutamine + H2O = L-glutamate + NH4(+). It functions in the pathway purine metabolism; IMP biosynthesis via de novo pathway; 5-amino-1-(5-phospho-D-ribosyl)imidazole from N(2)-formyl-N(1)-(5-phospho-D-ribosyl)glycinamide: step 1/2. Functionally, part of the phosphoribosylformylglycinamidine synthase complex involved in the purines biosynthetic pathway. Catalyzes the ATP-dependent conversion of formylglycinamide ribonucleotide (FGAR) and glutamine to yield formylglycinamidine ribonucleotide (FGAM) and glutamate. The FGAM synthase complex is composed of three subunits. PurQ produces an ammonia molecule by converting glutamine to glutamate. PurL transfers the ammonia molecule to FGAR to form FGAM in an ATP-dependent manner. PurS interacts with PurQ and PurL and is thought to assist in the transfer of the ammonia molecule from PurQ to PurL. This Mycobacterium leprae (strain TN) protein is Phosphoribosylformylglycinamidine synthase subunit PurQ.